Here is a 288-residue protein sequence, read N- to C-terminus: Elongation factor Ts (288 aa).

The interval 82 to 85 (TDFV) is involved in Mg(2+) ion dislocation from EF-Tu.

Belongs to the EF-Ts family.

The protein localises to the cytoplasm. Its function is as follows. Associates with the EF-Tu.GDP complex and induces the exchange of GDP to GTP. It remains bound to the aminoacyl-tRNA.EF-Tu.GTP complex up to the GTP hydrolysis stage on the ribosome. This is Elongation factor Ts from Prosthecochloris aestuarii (strain DSM 271 / SK 413).